Reading from the N-terminus, the 316-residue chain is Cilia-and flagella-associated protein 96 (316 aa).

The segment at Glu220 to Met242 is disordered. Over residues Phe227–Lys237 the composition is skewed to low complexity.

Belongs to the CFAP96 family.

The protein resides in the cytoplasm. Its subcellular location is the cytoskeleton. It is found in the microtubule organizing center. It localises to the centrosome. In Mus musculus (Mouse), this protein is Cilia-and flagella-associated protein 96 (Cfap96).